The primary structure comprises 358 residues: tRNA (guanine-N(7)-)-methyltransferase (358 aa).

The disordered stretch occupies residues 1 to 29 (MTPPPPKRQKRDEYRKATAEATSQSGASD). Residues glycine 99 and 122–123 (EI) each bind S-adenosyl-L-methionine. Low complexity predominate over residues 151–186 (TATAASETPSQQQAQIDGKQANANAAADAASPAPST). The disordered stretch occupies residues 151–194 (TATAASETPSQQQAQIDGKQANANAAADAASPAPSTDTEHMPTT). S-adenosyl-L-methionine contacts are provided by residues 209-210 (NT) and cysteine 229. Residue aspartate 232 is part of the active site. 330–332 (TEE) is an S-adenosyl-L-methionine binding site.

The protein belongs to the class I-like SAM-binding methyltransferase superfamily. TrmB family. In terms of assembly, forms a complex with trm82.

Its subcellular location is the nucleus. The enzyme catalyses guanosine(46) in tRNA + S-adenosyl-L-methionine = N(7)-methylguanosine(46) in tRNA + S-adenosyl-L-homocysteine. It participates in tRNA modification; N(7)-methylguanine-tRNA biosynthesis. Its function is as follows. Catalyzes the formation of N(7)-methylguanine at position 46 (m7G46) in tRNA. The protein is tRNA (guanine-N(7)-)-methyltransferase (trm8) of Aspergillus fumigatus (strain ATCC MYA-4609 / CBS 101355 / FGSC A1100 / Af293) (Neosartorya fumigata).